The primary structure comprises 61 residues: UPF0434 protein PSPA7_2181 (61 aa).

The protein belongs to the UPF0434 family.

The polypeptide is UPF0434 protein PSPA7_2181 (Pseudomonas paraeruginosa (strain DSM 24068 / PA7) (Pseudomonas aeruginosa (strain PA7))).